The sequence spans 169 residues: Probable inosine/xanthosine triphosphatase (169 aa).

7-12 (STNKAK) contacts substrate. Glutamate 35 provides a ligand contact to Mg(2+).

Belongs to the YjjX NTPase family. As to quaternary structure, homodimer. It depends on Mg(2+) as a cofactor. Mn(2+) is required as a cofactor.

It catalyses the reaction XTP + H2O = XDP + phosphate + H(+). The enzyme catalyses ITP + H2O = IDP + phosphate + H(+). In terms of biological role, phosphatase that hydrolyzes non-canonical purine nucleotides such as XTP and ITP to their respective diphosphate derivatives. Probably excludes non-canonical purines from DNA/RNA precursor pool, thus preventing their incorporation into DNA/RNA and avoiding chromosomal lesions. The sequence is that of Probable inosine/xanthosine triphosphatase from Sulfurisphaera tokodaii (strain DSM 16993 / JCM 10545 / NBRC 100140 / 7) (Sulfolobus tokodaii).